Reading from the N-terminus, the 299-residue chain is Regucalcin (299 aa).

An a divalent metal cation-binding site is contributed by Glu18. Residues Arg101, Asn103, and Glu121 each coordinate substrate. A divalent metal cation contacts are provided by Asn154 and Asp204. Asp204 (proton donor/acceptor) is an active-site residue. Lys244 and Lys253 each carry N6-succinyllysine.

Belongs to the SMP-30/CGR1 family. As to quaternary structure, monomer. Zn(2+) serves as cofactor. It depends on Mn(2+) as a cofactor. Requires Ca(2+) as cofactor. The cofactor is Mg(2+).

Its subcellular location is the cytoplasm. The catalysed reaction is D-glucono-1,5-lactone + H2O = D-gluconate + H(+). The protein operates within cofactor biosynthesis; L-ascorbate biosynthesis via UDP-alpha-D-glucuronate pathway; L-ascorbate from UDP-alpha-D-glucuronate: step 3/4. In terms of biological role, gluconolactonase with low activity towards other sugar lactones, including gulonolactone and galactonolactone. Catalyzes a key step in ascorbic acid (vitamin C) biosynthesis. Can also hydrolyze diisopropyl phosphorofluoridate and phenylacetate (in vitro). Calcium-binding protein. Modulates Ca(2+) signaling, and Ca(2+)-dependent cellular processes and enzyme activities. The sequence is that of Regucalcin (RGN) from Bos taurus (Bovine).